A 342-amino-acid polypeptide reads, in one-letter code: Nucleoid-associated protein Sputcn32_2288 (342 aa).

It belongs to the YejK family.

The protein localises to the cytoplasm. The protein resides in the nucleoid. This chain is Nucleoid-associated protein Sputcn32_2288, found in Shewanella putrefaciens (strain CN-32 / ATCC BAA-453).